A 352-amino-acid polypeptide reads, in one-letter code: Invasion chromosome antigen T (352 aa).

Belongs to the IcaT/YfdF family.

Its subcellular location is the secreted. Its function is as follows. May contribute to pathogenesis, although some of its characteristics suggest it is a fossil gene. This Shigella flexneri serotype 5a (strain M90T) protein is Invasion chromosome antigen T.